The primary structure comprises 429 residues: Probable M18 family aminopeptidase 2 (429 aa).

3 residues coordinate Zn(2+): His82, His156, and His401.

It belongs to the peptidase M18 family. The cofactor is Zn(2+).

This Pseudomonas putida (strain ATCC 47054 / DSM 6125 / CFBP 8728 / NCIMB 11950 / KT2440) protein is Probable M18 family aminopeptidase 2.